A 168-amino-acid chain; its full sequence is Small ribosomal subunit protein uS5 (168 aa).

One can recognise an S5 DRBM domain in the interval 17-80; the sequence is IEDQLVAVNR…EDGKKKMINV (64 aa).

This sequence belongs to the universal ribosomal protein uS5 family. In terms of assembly, part of the 30S ribosomal subunit. Contacts proteins S4 and S8.

Its function is as follows. With S4 and S12 plays an important role in translational accuracy. Located at the back of the 30S subunit body where it stabilizes the conformation of the head with respect to the body. The chain is Small ribosomal subunit protein uS5 from Lactobacillus acidophilus (strain ATCC 700396 / NCK56 / N2 / NCFM).